The chain runs to 494 residues: UDP-N-acetylmuramate--L-alanine ligase (494 aa).

Position 140 to 146 (140 to 146 (GTHGKTT)) interacts with ATP.

The protein belongs to the MurCDEF family.

The protein resides in the cytoplasm. The catalysed reaction is UDP-N-acetyl-alpha-D-muramate + L-alanine + ATP = UDP-N-acetyl-alpha-D-muramoyl-L-alanine + ADP + phosphate + H(+). Its pathway is cell wall biogenesis; peptidoglycan biosynthesis. Cell wall formation. This chain is UDP-N-acetylmuramate--L-alanine ligase, found in Trichormus variabilis (strain ATCC 29413 / PCC 7937) (Anabaena variabilis).